The primary structure comprises 274 residues: Dermonecrotic toxin SdSicTox-betaIIB1biv (274 aa).

Histidine 5 is a catalytic residue. Glutamate 25 and aspartate 27 together coordinate Mg(2+). The active-site Nucleophile is histidine 41. 2 disulfide bridges follow: cysteine 45/cysteine 51 and cysteine 47/cysteine 190. Mg(2+) is bound at residue aspartate 85.

The protein belongs to the arthropod phospholipase D family. Class II subfamily. Mg(2+) is required as a cofactor. In terms of tissue distribution, expressed by the venom gland.

The protein localises to the secreted. The enzyme catalyses an N-(acyl)-sphingosylphosphocholine = an N-(acyl)-sphingosyl-1,3-cyclic phosphate + choline. It catalyses the reaction an N-(acyl)-sphingosylphosphoethanolamine = an N-(acyl)-sphingosyl-1,3-cyclic phosphate + ethanolamine. It carries out the reaction a 1-acyl-sn-glycero-3-phosphocholine = a 1-acyl-sn-glycero-2,3-cyclic phosphate + choline. The catalysed reaction is a 1-acyl-sn-glycero-3-phosphoethanolamine = a 1-acyl-sn-glycero-2,3-cyclic phosphate + ethanolamine. Dermonecrotic toxins cleave the phosphodiester linkage between the phosphate and headgroup of certain phospholipids (sphingolipid and lysolipid substrates), forming an alcohol (often choline) and a cyclic phosphate. This toxin acts on sphingomyelin (SM). It may also act on ceramide phosphoethanolamine (CPE), lysophosphatidylcholine (LPC) and lysophosphatidylethanolamine (LPE), but not on lysophosphatidylserine (LPS), and lysophosphatidylglycerol (LPG). It acts by transphosphatidylation, releasing exclusively cyclic phosphate products as second products. Induces dermonecrosis, hemolysis, increased vascular permeability, edema, inflammatory response, and platelet aggregation. In Sicarius cf. damarensis (strain GJB-2008) (Six-eyed sand spider), this protein is Dermonecrotic toxin SdSicTox-betaIIB1biv.